A 200-amino-acid chain; its full sequence is Adenylate kinase (200 aa).

10-15 (GAGKGT) lines the ATP pocket. Residues 30 to 59 (STGDMLRAAVAAETPVGLEAKAIMESGGLV) are NMP. AMP-binding positions include Thr-31, Arg-36, 57 to 59 (GLV), 85 to 88 (GFPR), and Gln-92. Residues 126–142 (KRAEETAARGQPVRKDD) form an LID region. Arg-127 contributes to the ATP binding site. 2 residues coordinate AMP: Arg-139 and Arg-150. Residue Lys-178 participates in ATP binding.

The protein belongs to the adenylate kinase family. In terms of assembly, monomer.

The protein resides in the cytoplasm. The catalysed reaction is AMP + ATP = 2 ADP. Its pathway is purine metabolism; AMP biosynthesis via salvage pathway; AMP from ADP: step 1/1. Catalyzes the reversible transfer of the terminal phosphate group between ATP and AMP. Plays an important role in cellular energy homeostasis and in adenine nucleotide metabolism. The sequence is that of Adenylate kinase from Methylorubrum extorquens (strain PA1) (Methylobacterium extorquens).